The following is a 24-amino-acid chain: M-poneritoxin-Ng2b (24 aa).

At L24 the chain carries Leucine amide.

In terms of tissue distribution, expressed by the venom gland.

Its subcellular location is the secreted. In terms of biological role, has a broad spectrum of activity against both Gram-positive and Gram-negative bacteria. Is inactive against yeast, erythrocytes, and insects. The protein is M-poneritoxin-Ng2b of Neoponera goeldii (Ponerine ant).